A 540-amino-acid chain; its full sequence is Probable G-protein coupled receptor 75 (540 aa).

Polar residues predominate over residues 1 to 15 (MNSTGHLQDAPNATS). The interval 1 to 27 (MNSTGHLQDAPNATSLHVPHSQEGNST) is disordered. The Extracellular portion of the chain corresponds to 1–46 (MNSTGHLQDAPNATSLHVPHSQEGNSTSLQEGLQDLIHTATLVTCT). 3 N-linked (GlcNAc...) asparagine glycosylation sites follow: Asn-2, Asn-12, and Asn-25. A helical transmembrane segment spans residues 47-67 (FLLAVIFCLGSYGNFIVFLSF). Over 68-86 (FDPAFRKFRTNFDFMILNL) the chain is Cytoplasmic. The helical transmembrane segment at 87–107 (SFCDLFICGVTAPMFTFVLFF) threads the bilayer. The Extracellular segment spans residues 108 to 120 (SSASSIPDAFCFT). A helical transmembrane segment spans residues 121–141 (FHLTSSGFIIMSLKTVAVIAL). Residues 142-160 (HRLRMVLGKQPNRTASFPC) lie on the Cytoplasmic side of the membrane. Residues 161–181 (TVLLTLLLWATSFTLATLATL) form a helical membrane-spanning segment. The Extracellular segment spans residues 182–205 (KTSKSHLCLPMSSLIAGKGKAILS). The helical transmembrane segment at 206-226 (LYVVDFTFCVAVVSVSYIMIA) threads the bilayer. Over 227 to 318 (QTLRKNAQVR…INLSTAKDSK (92 aa)) the chain is Cytoplasmic. A helical membrane pass occupies residues 319–339 (AVVTCVIIVLSVLVCCLPLGI). Residues 340–350 (SLVQVVLSSNG) lie on the Extracellular side of the membrane. Residues 351–371 (SFILYQFELFGFTLIFFKSGL) traverse the membrane as a helical segment. The Cytoplasmic portion of the chain corresponds to 372-540 (NPFIYSRNSA…SAKQIPVPSV (169 aa)).

The protein belongs to the G-protein coupled receptor 1 family. As to expression, expressed at high levels in brain and spinal cord and at detectable levels in retinal pigment epithelium. In situ hybridization of adult eye sections localized transcripts only to the perivascular cells, surrounding retinal arterioles, in the ganglion cell/nerve fiber layer. Also expressed by islet cells (at protein level).

Its subcellular location is the cell membrane. G protein-coupled receptor that is activated by the chemokine CCL5/RANTES. Probably coupled to heterotrimeric Gq proteins, it stimulates inositol trisphosphate production and calcium mobilization upon activation. Together with CCL5/RANTES, may play a role in neuron survival through activation of a downstream signaling pathway involving the PI3, Akt and MAP kinases. CCL5/RANTES may also regulate insulin secretion by pancreatic islet cells through activation of this receptor. In Homo sapiens (Human), this protein is Probable G-protein coupled receptor 75 (GPR75).